A 621-amino-acid chain; its full sequence is Kelch-like protein 6 (621 aa).

The BTB domain occupies 72 to 139 (TDVILCVDIQ…TYTSKALITK (68 aa)). In terms of domain architecture, BACK spans 174-276 (CVGILRLADT…DPWYFVETVE (103 aa)). 6 Kelch repeats span residues 320 to 367 (VFMI…NKKW), 378 to 421 (EVYI…VLGG), 422 to 468 (KVYV…SHKK), 470 to 516 (LYVI…SFRD), 517 to 558 (RIYV…PCNN), and 560 to 606 (LYIT…TIRK).

As to expression, found in germinal center B-cells.

In terms of biological role, involved in B-lymphocyte antigen receptor signaling and germinal center formation. This chain is Kelch-like protein 6 (KLHL6), found in Homo sapiens (Human).